A 283-amino-acid polypeptide reads, in one-letter code: Alkaline ceramidase (283 aa).

D28, W29, E31, N33, and E42 together coordinate Ca(2+). Helical transmembrane passes span 43–63 (FVNT…IMLF) and 69–89 (FVTP…LSSM). H92 contacts Zn(2+). Helical transmembrane passes span 98–118 (IGQL…FSLF), 134–151 (TFSW…GLSW), 154–174 (PIVN…MLYT), and 187–209 (LGIR…RIFC). Residues H221 and H225 each coordinate Zn(2+). Residues 222-242 (GFWHIFIFIAAYTVLVLFAYF) form a helical membrane-spanning segment.

This sequence belongs to the alkaline ceramidase family. Requires Zn(2+) as cofactor. In terms of tissue distribution, expressed in the central midgut of late embryos. In brain, it is present at the interhemispheric junction and in groups of cells in the central brain.

The protein localises to the membrane. The catalysed reaction is an N-acylsphing-4-enine + H2O = sphing-4-enine + a fatty acid. Hydrolyzes the sphingolipid ceramide into sphingosine and free fatty acid. The sequence is that of Alkaline ceramidase (bwa) from Drosophila melanogaster (Fruit fly).